Reading from the N-terminus, the 172-residue chain is Adenine phosphoribosyltransferase (172 aa).

It belongs to the purine/pyrimidine phosphoribosyltransferase family. Homodimer.

It is found in the cytoplasm. It carries out the reaction AMP + diphosphate = 5-phospho-alpha-D-ribose 1-diphosphate + adenine. Its pathway is purine metabolism; AMP biosynthesis via salvage pathway; AMP from adenine: step 1/1. Its function is as follows. Catalyzes a salvage reaction resulting in the formation of AMP, that is energically less costly than de novo synthesis. This Staphylococcus aureus (strain Mu3 / ATCC 700698) protein is Adenine phosphoribosyltransferase.